Reading from the N-terminus, the 157-residue chain is Transcription elongation factor GreA (157 aa).

This sequence belongs to the GreA/GreB family.

Its function is as follows. Necessary for efficient RNA polymerase transcription elongation past template-encoded arresting sites. The arresting sites in DNA have the property of trapping a certain fraction of elongating RNA polymerases that pass through, resulting in locked ternary complexes. Cleavage of the nascent transcript by cleavage factors such as GreA or GreB allows the resumption of elongation from the new 3'terminus. GreA releases sequences of 2 to 3 nucleotides. The sequence is that of Transcription elongation factor GreA from Bartonella henselae (strain ATCC 49882 / DSM 28221 / CCUG 30454 / Houston 1) (Rochalimaea henselae).